Reading from the N-terminus, the 469-residue chain is 3-isopropylmalate dehydratase large subunit (469 aa).

The [4Fe-4S] cluster site is built by Cys349, Cys410, and Cys413.

The protein belongs to the aconitase/IPM isomerase family. LeuC type 1 subfamily. As to quaternary structure, heterodimer of LeuC and LeuD. [4Fe-4S] cluster serves as cofactor.

It catalyses the reaction (2R,3S)-3-isopropylmalate = (2S)-2-isopropylmalate. Its pathway is amino-acid biosynthesis; L-leucine biosynthesis; L-leucine from 3-methyl-2-oxobutanoate: step 2/4. Its function is as follows. Catalyzes the isomerization between 2-isopropylmalate and 3-isopropylmalate, via the formation of 2-isopropylmaleate. The sequence is that of 3-isopropylmalate dehydratase large subunit from Neisseria meningitidis serogroup C / serotype 2a (strain ATCC 700532 / DSM 15464 / FAM18).